Reading from the N-terminus, the 260-residue chain is Putative ABC transporter ATP-binding protein (260 aa).

The ABC transporter domain maps to Ile-4–Pro-243. Gly-36–Thr-43 contributes to the ATP binding site.

The protein belongs to the ABC transporter superfamily.

This Streptococcus mutans serotype c (strain ATCC 700610 / UA159) protein is Putative ABC transporter ATP-binding protein (abcX).